The primary structure comprises 471 residues: MDGRQVVRARRWCATAAVALMTASTVAACGSDSGEIVISYYTPANEAATFTAVAQRCNAELGGRFRIEQRSLPREADAQRLQLARRLTGNDRSLDVMALDVVWTAEFAEAGWALPLSEDPAGLAEADATTNTLPGPLETAKWNGELYAAPITTNTQLLWYRADLMDEPPATWDEMLSEAARLHAQGGPSWIAVQGKQYEGLVVWFNTLLESAGGQVLSDDGQRVTLTDTPEHRAATVKALEIIKAVATAPGADPSITQTDENTARLALEQGRAALEVNWPYVLPSLLENAIKGGVGFLPLNENPALRGSINDVGTFAPTDEQFDLALNASKEVFGFARYPGVRPDEPARVTLGGLNLAVASTTRHKAEAFEAVRCLRNEENQRLTSIEGGLPAVRTSLYDDPQFQAKYPQYEIIRDQLINAAVRPATPVYQAMSTRMSATLAPISQIDPERTADELAEQVQQAIDGKGLIP.

The N-terminal stretch at 1–28 (MDGRQVVRARRWCATAAVALMTASTVAA) is a signal peptide. A lipid anchor (N-palmitoyl cysteine) is attached at Cys29. A lipid anchor (S-diacylglycerol cysteine) is attached at Cys29. Residues Asn45, Glu46, Gln79, Asp100, Asn154, Tyr198, Trp279, Tyr281, Gly354, and Arg424 each contribute to the alpha,alpha-trehalose site. An intrachain disulfide couples Cys57 to Cys375.

Belongs to the bacterial solute-binding protein 1 family. As to quaternary structure, monomer. The complex is composed of two ATP-binding proteins (SugC), two transmembrane proteins (SugA and SugB) and a solute-binding protein (LpqY).

It localises to the cell inner membrane. In terms of biological role, part of the ABC transporter complex LpqY-SugA-SugB-SugC, which is highly specific for uptake of trehalose. Involved in the recycling of extracellular trehalose released from trehalose-containing molecules synthesized by M.thermoresistibile. Trehalose uptake is essential for virulence. Binds deuterated trehalose with similar high affinity to trehalose, trehalose analogs including galactotrehalose, 4-azido-4-deoxy-trehalose, 6-azido-6-deoxy-trehalose, 3-azido-3-deoxy-trehalose and mannotrehalose in the order of decreasing affinity, respectively, and 2-azido-2-deoxy-trehalose and kojibiose (alpha1,2-glycosidic bond) with very low affinity. Does not recognize single glucose, 6-amino-6-deoxy-trehalose, trehalose-6-phosphate, nigerose (alpha1,3-glycosidic bond), maltose (alpha1,4-glycosidic bond), isomaltose (alpha1,6-glycosidic bond) or glycerophosphocholine. Decreased recognition of alpha,beta-trehalose and almost no recognition of beta,beta-trehalose. Substrate specificity indicates a strict requirement for an alpha1,1-linked disaccharide. The sequence is that of Trehalose-binding lipoprotein LpqY from Mycolicibacterium thermoresistibile (strain ATCC 19527 / DSM 44167 / CIP 105390 / JCM 6362 / NCTC 10409 / 316) (Mycobacterium thermoresistibile).